A 69-amino-acid chain; its full sequence is MATEYRTASWKLWLILDPRRVLTALFVYLTVIALLIHFGLLSTDRLNWWEFQRGLPKAASLVVVPPAVG.

Residues 2–20 (ATEYRTASWKLWLILDPRR) lie on the Cytoplasmic side of the membrane. Residues 21-41 (VLTALFVYLTVIALLIHFGLL) traverse the membrane as a helical segment. His-37 contributes to the a bacteriochlorophyll binding site. Residues 42-59 (STDRLNWWEFQRGLPKAA) are Periplasmic-facing. A propeptide spanning residues 60–69 (SLVVVPPAVG) is cleaved from the precursor.

This sequence belongs to the antenna complex alpha subunit family. As to quaternary structure, the core complex is formed by different alpha and beta chains, binding bacteriochlorophyll molecules, and arranged most probably in tetrameric structures disposed around the reaction center. The non-pigmented gamma chains may constitute additional components.

The protein resides in the cell inner membrane. Its function is as follows. Antenna complexes are light-harvesting systems, which transfer the excitation energy to the reaction centers. This chain is Light-harvesting protein B-1015 alpha chain (pufA), found in Blastochloris viridis (Rhodopseudomonas viridis).